A 152-amino-acid chain; its full sequence is Putative RING finger protein 157L (152 aa).

The segment at 111-146 adopts an RING-type zinc-finger fold; the sequence is CVVCYENEICIKIQPCNHFVVCKSCFNRLNTCPMCR.

It belongs to the IIV-6 157L family.

The protein is Putative RING finger protein 157L of Invertebrate iridescent virus 6 (IIV-6).